The chain runs to 308 residues: Ribonuclease Z (308 aa).

7 residues coordinate Zn(2+): His-63, His-65, Asp-67, His-68, His-140, Asp-211, and His-269. Asp-67 serves as the catalytic Proton acceptor.

It belongs to the RNase Z family. As to quaternary structure, homodimer. Zn(2+) is required as a cofactor.

The enzyme catalyses Endonucleolytic cleavage of RNA, removing extra 3' nucleotides from tRNA precursor, generating 3' termini of tRNAs. A 3'-hydroxy group is left at the tRNA terminus and a 5'-phosphoryl group is left at the trailer molecule.. Its function is as follows. Zinc phosphodiesterase, which displays some tRNA 3'-processing endonuclease activity. Probably involved in tRNA maturation, by removing a 3'-trailer from precursor tRNA. The chain is Ribonuclease Z from Bacillus velezensis (strain DSM 23117 / BGSC 10A6 / LMG 26770 / FZB42) (Bacillus amyloliquefaciens subsp. plantarum).